A 234-amino-acid polypeptide reads, in one-letter code: Accessory gland protein Acp29AB (234 aa).

The signal sequence occupies residues 1-21; the sequence is MYASNLLYLLALWNLWDLSGG. N-linked (GlcNAc...) asparagine glycosylation is found at asparagine 61 and asparagine 164. The region spanning 137–234 is the C-type lectin domain; the sequence is VTCRKMNGHL…SFVCQADQWA (98 aa). Intrachain disulfides connect cysteine 139–cysteine 228 and cysteine 207–cysteine 220.

As to expression, main cells of the accessory gland and in seminal fluid.

Its subcellular location is the secreted. Functionally, responsible for physiological and behavioral changes in mated female flies. The chain is Accessory gland protein Acp29AB (Acp29AB) from Drosophila melanogaster (Fruit fly).